A 152-amino-acid chain; its full sequence is Transcriptional regulator MraZ (152 aa).

SpoVT-AbrB domains lie at 5 to 52 and 81 to 124; these read ATLV…PLPE and ASEC…DETT.

This sequence belongs to the MraZ family. In terms of assembly, forms oligomers.

It is found in the cytoplasm. The protein localises to the nucleoid. Its function is as follows. Negatively regulates its own expression and that of the subsequent genes in the proximal part of the division and cell wall (dcw) gene cluster. Acts by binding directly to DNA. May also regulate the expression of genes outside the dcw cluster. This is Transcriptional regulator MraZ from Escherichia coli O45:K1 (strain S88 / ExPEC).